A 256-amino-acid chain; its full sequence is Alcohol dehydrogenase (256 aa).

Residue 12 to 35 (FVAGLGGIGLDTSKELVKRDLKNL) coordinates NAD(+). Substrate is bound at residue serine 140. Tyrosine 153 serves as the catalytic Proton acceptor.

It belongs to the short-chain dehydrogenases/reductases (SDR) family. Homodimer.

The enzyme catalyses a primary alcohol + NAD(+) = an aldehyde + NADH + H(+). It carries out the reaction a secondary alcohol + NAD(+) = a ketone + NADH + H(+). The chain is Alcohol dehydrogenase (Adh) from Drosophila mauritiana (Fruit fly).